Reading from the N-terminus, the 480-residue chain is Probable cyclodipeptide synthase PUL1 (480 aa).

The protein operates within siderophore biosynthesis. Functionally, probable cyclodipeptide synthase; part of the PUL gene cluster that mediates the formation of pulcherrimin, a red iron-containing pigment composed of two cyclized and modified leucine molecules that acts as a siderophore, a chelator that binds iron outside the cell for subsequent uptake. Two leucine molecules are cyclized via a cyclodipeptide synthase, and the resulting diketopiperazine is oxidized by a cytochrome P450 monooxygenase to generate pulcherriminic acid (PA), which can then spontaneously bind iron to form pulcherrimin. The probable cyclodipeptide synthase PUL1 and the cytochrome P450 monooxygenase PUL2 encode the enzymes responsible for the two-step pulcherrimin biosynthesis pathway. The chain is Probable cyclodipeptide synthase PUL1 from Kluyveromyces lactis (strain ATCC 8585 / CBS 2359 / DSM 70799 / NBRC 1267 / NRRL Y-1140 / WM37) (Yeast).